The following is a 258-amino-acid chain: Small ribosomal subunit protein uS2 (258 aa).

Belongs to the universal ribosomal protein uS2 family.

This chain is Small ribosomal subunit protein uS2, found in Granulibacter bethesdensis (strain ATCC BAA-1260 / CGDNIH1).